The chain runs to 267 residues: Indole-3-glycerol phosphate synthase (267 aa).

Belongs to the TrpC family.

The catalysed reaction is 1-(2-carboxyphenylamino)-1-deoxy-D-ribulose 5-phosphate + H(+) = (1S,2R)-1-C-(indol-3-yl)glycerol 3-phosphate + CO2 + H2O. It functions in the pathway amino-acid biosynthesis; L-tryptophan biosynthesis; L-tryptophan from chorismate: step 4/5. The sequence is that of Indole-3-glycerol phosphate synthase from Ralstonia pickettii (strain 12J).